The following is a 226-amino-acid chain: Thiamine-phosphate synthase (226 aa).

4-amino-2-methyl-5-(diphosphooxymethyl)pyrimidine is bound by residues 46 to 50 and Asp83; that span reads QFRDK. 2 residues coordinate Mg(2+): Asp84 and Asp103. Ser122 contacts 4-amino-2-methyl-5-(diphosphooxymethyl)pyrimidine. Position 149 to 151 (149 to 151) interacts with 2-[(2R,5Z)-2-carboxy-4-methylthiazol-5(2H)-ylidene]ethyl phosphate; that stretch reads TQS. Lys152 serves as a coordination point for 4-amino-2-methyl-5-(diphosphooxymethyl)pyrimidine. Residues Gly181 and 201–202 contribute to the 2-[(2R,5Z)-2-carboxy-4-methylthiazol-5(2H)-ylidene]ethyl phosphate site; that span reads IT.

This sequence belongs to the thiamine-phosphate synthase family. The cofactor is Mg(2+).

It catalyses the reaction 2-[(2R,5Z)-2-carboxy-4-methylthiazol-5(2H)-ylidene]ethyl phosphate + 4-amino-2-methyl-5-(diphosphooxymethyl)pyrimidine + 2 H(+) = thiamine phosphate + CO2 + diphosphate. The enzyme catalyses 2-(2-carboxy-4-methylthiazol-5-yl)ethyl phosphate + 4-amino-2-methyl-5-(diphosphooxymethyl)pyrimidine + 2 H(+) = thiamine phosphate + CO2 + diphosphate. The catalysed reaction is 4-methyl-5-(2-phosphooxyethyl)-thiazole + 4-amino-2-methyl-5-(diphosphooxymethyl)pyrimidine + H(+) = thiamine phosphate + diphosphate. Its pathway is cofactor biosynthesis; thiamine diphosphate biosynthesis; thiamine phosphate from 4-amino-2-methyl-5-diphosphomethylpyrimidine and 4-methyl-5-(2-phosphoethyl)-thiazole: step 1/1. Its function is as follows. Condenses 4-methyl-5-(beta-hydroxyethyl)thiazole monophosphate (THZ-P) and 2-methyl-4-amino-5-hydroxymethyl pyrimidine pyrophosphate (HMP-PP) to form thiamine monophosphate (TMP). The sequence is that of Thiamine-phosphate synthase from Haemophilus influenzae (strain 86-028NP).